Here is a 301-residue protein sequence, read N- to C-terminus: Probable alpha-L-glutamate ligase 1 (301 aa).

The 184-residue stretch at 104-287 (MQLMSRRGIG…VAGAIIAFIE (184 aa)) folds into the ATP-grasp domain. Residues Lys141, 178-179 (EY), Asp187, and 211-213 (RSN) contribute to the ATP site. 3 residues coordinate Mg(2+): Asp248, Glu260, and Asn262. Mn(2+) contacts are provided by Asp248, Glu260, and Asn262.

The protein belongs to the RimK family. Mg(2+) serves as cofactor. Requires Mn(2+) as cofactor.

This is Probable alpha-L-glutamate ligase 1 from Shewanella amazonensis (strain ATCC BAA-1098 / SB2B).